A 181-amino-acid polypeptide reads, in one-letter code: Adenine phosphoribosyltransferase (181 aa).

This sequence belongs to the purine/pyrimidine phosphoribosyltransferase family. Homodimer.

Its subcellular location is the cytoplasm. It catalyses the reaction AMP + diphosphate = 5-phospho-alpha-D-ribose 1-diphosphate + adenine. The protein operates within purine metabolism; AMP biosynthesis via salvage pathway; AMP from adenine: step 1/1. Functionally, catalyzes a salvage reaction resulting in the formation of AMP, that is energically less costly than de novo synthesis. This is Adenine phosphoribosyltransferase from Vibrio cholerae serotype O1 (strain ATCC 39541 / Classical Ogawa 395 / O395).